The primary structure comprises 490 residues: Monocarboxylate transporter 3 (490 aa).

The Cytoplasmic portion of the chain corresponds to 1–14 (MGAGGPRRGAGPPD). A helical transmembrane segment spans residues 15-35 (GGWGWVVLGACFVITGFAYGF). Residues 36 to 58 (PKAVSVFFRELKRDFGAGYSDTA) are Extracellular-facing. A helical transmembrane segment spans residues 59–79 (WVSSIMLAMLYGTGPLSSILV). Residues 80 to 85 (TRFGCR) are Cytoplasmic-facing. Residues 86-106 (PVMLAGGLLASAGMILASFAS) traverse the membrane as a helical segment. The Extracellular segment spans residues 107–115 (RLLELYLTA). The chain crosses the membrane as a helical span at residues 116–136 (GVLTGLGLALNFQPSLIMLGL). Residues 137–147 (YFERRRPLANG) lie on the Cytoplasmic side of the membrane. Residues 148-168 (LAAAGSPVFLSTLSPLGQLLG) traverse the membrane as a helical segment. At 169–172 (ERFG) the chain is on the extracellular side. A helical transmembrane segment spans residues 173–193 (WRGGFLLFGGLLLHCCACGAV). Residues 194 to 230 (MRPPPGPQPRPDPAPPGGRARHRQLLDLAVCTDRTFM) are Cytoplasmic-facing. The chain crosses the membrane as a helical span at residues 231–251 (VYMVTKFLMALGLFVPAILLV). Residues 252 to 257 (NYAKDA) are Extracellular-facing. A helical transmembrane segment spans residues 258-278 (GVPDAEAAFLLSIVGFVDIVA). Over 279-293 (RPACGALAGLGRLRP) the chain is Cytoplasmic. Residues 294–314 (HVPYLFSLALLANGLTDLISA) form a helical membrane-spanning segment. Residues 315 to 318 (RARS) lie on the Extracellular side of the membrane. A helical transmembrane segment spans residues 319–339 (YGTLVAFCIAFGLSYGMVGAL). The Cytoplasmic segment spans residues 340–352 (QFEVLMATVGAPR). The chain crosses the membrane as a helical span at residues 353–373 (FPSALGLVLLVEAVAVLIGPP). At 374–386 (SAGRLVDALKNYE) the chain is on the extracellular side. Residues 387–407 (IIFYLAGSEVVLAGVFMAVTT) traverse the membrane as a helical segment. The Cytoplasmic portion of the chain corresponds to 408–490 (YCCQRCSKDI…GGHEAHGQNA (83 aa)). The segment at 419 to 490 (PGPSAEGGTS…GGHEAHGQNA (72 aa)) is disordered. Basolateral sorting signal regions lie at residues 426-460 (GTSDTEDVEAERDSEPMPASTEEPGSLEALEVLSP) and 461-480 (RAGSPEPEEEAVPDLSHESV). The span at 475-490 (LSHESVGGHEAHGQNA) shows a compositional bias: basic and acidic residues.

The protein belongs to the major facilitator superfamily. Monocarboxylate porter (TC 2.A.1.13) family. Retinal pigment epithelium.

Its subcellular location is the basolateral cell membrane. It carries out the reaction (S)-lactate(in) + H(+)(in) = (S)-lactate(out) + H(+)(out). Its function is as follows. Probable retinal pigment epithelium (RPE)-specific proton-coupled L-lactate transporter. May facilitate transport of lactate and H(+) out of the retina and could therefore play a role in pH and ion homeostasis of the outer retina. The chain is Monocarboxylate transporter 3 (Slc16a8) from Rattus norvegicus (Rat).